The following is a 222-amino-acid chain: MCPPRGLLLVTILVLLSHLDHLTWARSLPTASPSPGIFQCLNHSQNLLRAVSNTLQKARQTLDYIPCTSEEIDHEDITKDKTSTVEACLPLELTMNESCLASREISLITNGSCLASGKASFMTVLCLSSIYEDLKMYQMEFKAMNAKLLMDPKRQIFLDQNMLTAIDELLQALNFNSVTVPQKSSLEEPDFYKTKIKLCILLHAFRIRAVTIDRMMSYLNSS.

Residues 1 to 25 (MCPPRGLLLVTILVLLSHLDHLTWA) form the signal peptide. Intrachain disulfides connect cysteine 40/cysteine 113, cysteine 67/cysteine 199, and cysteine 88/cysteine 126. 3 N-linked (GlcNAc...) asparagine glycosylation sites follow: asparagine 42, asparagine 96, and asparagine 110.

Belongs to the IL-6 superfamily. In terms of assembly, heterodimer with IL12B; disulfide-linked. This heterodimer is known as interleukin IL-12. Heterodimer with EBI3/IL27B; not disulfide-linked. This heterodimer is known as interleukin IL-35. Interacts with NBR1; this interaction promotes IL-12 secretion.

The protein resides in the secreted. Heterodimerizes with IL12B to form the IL-12 cytokine or with EBI3/IL27B to form the IL-35 cytokine. IL-12 is primarily produced by professional antigen-presenting cells (APCs) such as B-cells and dendritic cells (DCs) as well as macrophages and granulocytes and regulates T-cell and natural killer-cell responses, induces the production of interferon-gamma (IFN-gamma), favors the differentiation of T-helper 1 (Th1) cells and is an important link between innate resistance and adaptive immunity. Mechanistically, exerts its biological effects through a receptor composed of IL12R1 and IL12R2 subunits. Binding to the receptor results in the rapid tyrosine phosphorylation of a number of cellular substrates including the JAK family kinases TYK2 and JAK2. In turn, recruited STAT4 gets phosphorylated and translocates to the nucleus where it regulates cytokine/growth factor responsive genes. As part of IL-35, plays essential roles in maintaining the immune homeostasis of the liver microenvironment and also functions as an immune-suppressive cytokine. Mediates biological events through unconventional receptors composed of IL12RB2 and gp130/IL6ST heterodimers or homodimers. Signaling requires the transcription factors STAT1 and STAT4, which form a unique heterodimer that binds to distinct DNA sites. This is Interleukin-12 subunit alpha (IL12A) from Canis lupus familiaris (Dog).